Consider the following 119-residue polypeptide: Protein TusC (119 aa).

The protein belongs to the DsrF/TusC family. In terms of assembly, heterohexamer, formed by a dimer of trimers. The hexameric TusBCD complex contains 2 copies each of TusB, TusC and TusD. The TusBCD complex interacts with TusE.

It is found in the cytoplasm. Part of a sulfur-relay system required for 2-thiolation of 5-methylaminomethyl-2-thiouridine (mnm(5)s(2)U) at tRNA wobble positions. This chain is Protein TusC, found in Shigella boydii serotype 18 (strain CDC 3083-94 / BS512).